Consider the following 200-residue polypeptide: NADH-quinone oxidoreductase subunit B (200 aa).

Cys-78, Cys-79, Cys-144, and Cys-174 together coordinate [4Fe-4S] cluster.

The protein belongs to the complex I 20 kDa subunit family. In terms of assembly, NDH-1 is composed of 14 different subunits. Subunits NuoB, C, D, E, F, and G constitute the peripheral sector of the complex. It depends on [4Fe-4S] cluster as a cofactor.

It localises to the cell membrane. The catalysed reaction is a quinone + NADH + 5 H(+)(in) = a quinol + NAD(+) + 4 H(+)(out). Its function is as follows. NDH-1 shuttles electrons from NADH, via FMN and iron-sulfur (Fe-S) centers, to quinones in the respiratory chain. The immediate electron acceptor for the enzyme in this species is believed to be ubiquinone. Couples the redox reaction to proton translocation (for every two electrons transferred, four hydrogen ions are translocated across the cytoplasmic membrane), and thus conserves the redox energy in a proton gradient. In Dehalococcoides mccartyi (strain ATCC BAA-2266 / KCTC 15142 / 195) (Dehalococcoides ethenogenes (strain 195)), this protein is NADH-quinone oxidoreductase subunit B.